The following is a 240-amino-acid chain: Guanine nucleotide exchange factor sopE2 (240 aa).

The segment at 78-240 (LTSKTVKDFM…IANKYLQNAS (163 aa)) is GEF catalytic domain.

Belongs to the GEF (guanine exchange factor) SopE family.

It localises to the secreted. In terms of biological role, activator for CDC42 by directly engaging this Rho GTPase and acting as potent guanine nucleotide exchange factor (GEF). This activation results in actin cytoskeleton rearrangements and stimulates membrane ruffling, promoting bacterial entry into non-phagocytic cells. Chaperone InvB is required for secretion, translocation and stabilization of intracellular levels of sopE2. This chain is Guanine nucleotide exchange factor sopE2 (sopE2), found in Salmonella paratyphi A (strain ATCC 9150 / SARB42).